Consider the following 138-residue polypeptide: Basic phospholipase A2 PL-Y (138 aa).

The signal sequence occupies residues 1 to 16; that stretch reads MRTLWIMAVLLVGVEG. 7 disulfide bridges follow: Cys42/Cys131, Cys44/Cys60, Cys59/Cys111, Cys65/Cys138, Cys66/Cys104, Cys73/Cys97, and Cys91/Cys102. The Ca(2+) site is built by Tyr43, Gly45, and Gly47. The active site involves His63. Asp64 is a Ca(2+) binding site. Asp105 is a catalytic residue.

Belongs to the phospholipase A2 family. Group II subfamily. D49 sub-subfamily. Ca(2+) serves as cofactor. Expressed by the venom gland.

The protein localises to the secreted. The enzyme catalyses a 1,2-diacyl-sn-glycero-3-phosphocholine + H2O = a 1-acyl-sn-glycero-3-phosphocholine + a fatty acid + H(+). Its function is as follows. Snake venom phospholipase A2 (PLA2) that can cleave arachidonate at the sn-2 position from phospholipides in the micellar state or in bilayer membranes. PLA2 catalyzes the calcium-dependent hydrolysis of the 2-acyl groups in 3-sn-phosphoglycerides. The protein is Basic phospholipase A2 PL-Y of Protobothrops flavoviridis (Habu).